A 193-amino-acid chain; its full sequence is Glycerol-3-phosphate acyltransferase (193 aa).

A run of 5 helical transmembrane segments spans residues A2–V22, Q51–A71, G78–F98, V112–V132, and I154–W174.

This sequence belongs to the PlsY family. In terms of assembly, probably interacts with PlsX.

Its subcellular location is the cell inner membrane. It catalyses the reaction an acyl phosphate + sn-glycerol 3-phosphate = a 1-acyl-sn-glycero-3-phosphate + phosphate. It functions in the pathway lipid metabolism; phospholipid metabolism. Catalyzes the transfer of an acyl group from acyl-phosphate (acyl-PO(4)) to glycerol-3-phosphate (G3P) to form lysophosphatidic acid (LPA). This enzyme utilizes acyl-phosphate as fatty acyl donor, but not acyl-CoA or acyl-ACP. The protein is Glycerol-3-phosphate acyltransferase of Coxiella burnetii (strain CbuK_Q154) (Coxiella burnetii (strain Q154)).